Here is a 538-residue protein sequence, read N- to C-terminus: Fusion glycoprotein F0 (538 aa).

Residues 1-19 form the signal peptide; it reads MKAFSVTCLGFAVFSSSIC. At 20–482 the chain is on the extracellular side; the sequence is VNINILQQIG…QLLSVSVNSK (463 aa). Residues Asn56 and Asn73 are each glycosylated (N-linked (GlcNAc...) asparagine; by host). Positions 103–127 are fusion peptide; it reads FAGIAIGIAALGVATAAQVTAAVSL. A coiled-coil region spans residues 128 to 156; sequence VQAQTNARAIAAMKNSIQATNRAIFEVKE. Residue Asn182 is glycosylated (N-linked (GlcNAc...) asparagine; by host). Cystine bridges form between Cys324/Cys333, Cys348/Cys356, Cys380/Cys385, and Cys387/Cys410. Asn352 is a glycosylation site (N-linked (GlcNAc...) asparagine; by host). 3 N-linked (GlcNAc...) asparagine; by host glycosylation sites follow: Asn427, Asn433, and Asn457. Residues 452–477 adopt a coiled-coil conformation; sequence ELSKVNASLQNAVKYIKESNHQLLSV. The helical transmembrane segment at 483–503 threads the bilayer; that stretch reads IGAIIVTALVLSILSIIISLL. The Cytoplasmic portion of the chain corresponds to 504–538; that stretch reads FCCWAYIATKEIRRINFKTNHINTISSSVDDLIRY.

This sequence belongs to the paramyxoviruses fusion glycoprotein family. Homotrimer; disulfide-linked F1-F2. Interacts with host LAMP1; LAMP2 and LAMP3; these interactions promote the cleavage of the viral fusion protein F. Post-translationally, the inactive precursor F0 is glycosylated and proteolytically cleaved into F1 and F2 to be functionally active. The cleavage is mediated by cellular proteases including host FURIN during the transport and maturation of the polypeptide.

Its subcellular location is the virion membrane. It localises to the host cell membrane. Class I viral fusion protein. Under the current model, the protein has at least 3 conformational states: pre-fusion native state, pre-hairpin intermediate state, and post-fusion hairpin state. During viral and plasma cell membrane fusion, the heptad repeat (HR) regions assume a trimer-of-hairpins structure, positioning the fusion peptide in close proximity to the C-terminal region of the ectodomain. The formation of this structure appears to drive apposition and subsequent fusion of viral and plasma cell membranes. Directs fusion of viral and cellular membranes leading to delivery of the nucleocapsid into the cytoplasm. This fusion is pH independent and occurs directly at the outer cell membrane. The trimer of F1-F2 (F protein) probably interacts with HN at the virion surface. Upon HN binding to its cellular receptor, the hydrophobic fusion peptide is unmasked and interacts with the cellular membrane, inducing the fusion between cell and virion membranes. Later in infection, F proteins expressed at the plasma membrane of infected cells could mediate fusion with adjacent cells to form syncytia, a cytopathic effect that could lead to tissue necrosis. The polypeptide is Fusion glycoprotein F0 (F) (Homo sapiens (Human)).